Reading from the N-terminus, the 192-residue chain is A-type ATP synthase subunit E (192 aa).

This sequence belongs to the V-ATPase E subunit family. As to quaternary structure, has multiple subunits with at least A(3), B(3), C, D, E, F, H, I and proteolipid K(x).

Its subcellular location is the cell membrane. Component of the A-type ATP synthase that produces ATP from ADP in the presence of a proton gradient across the membrane. This Methanoculleus marisnigri (strain ATCC 35101 / DSM 1498 / JR1) protein is A-type ATP synthase subunit E.